An 85-amino-acid chain; its full sequence is Large ribosomal subunit protein bL27 (85 aa).

Belongs to the bacterial ribosomal protein bL27 family.

The polypeptide is Large ribosomal subunit protein bL27 (Campylobacter concisus (strain 13826)).